Consider the following 160-residue polypeptide: Cytochrome b6-f complex subunit 4 (160 aa).

The next 3 membrane-spanning stretches (helical) occupy residues 36–56 (LLYI…GLAV), 95–115 (LLGV…PFLE), and 131–151 (TVFL…TLPI).

It belongs to the cytochrome b family. PetD subfamily. In terms of assembly, the 4 large subunits of the cytochrome b6-f complex are cytochrome b6, subunit IV (17 kDa polypeptide, petD), cytochrome f and the Rieske protein, while the 4 small subunits are petG, petL, petM and petN. The complex functions as a dimer.

The protein resides in the plastid. Its subcellular location is the chloroplast thylakoid membrane. Component of the cytochrome b6-f complex, which mediates electron transfer between photosystem II (PSII) and photosystem I (PSI), cyclic electron flow around PSI, and state transitions. This chain is Cytochrome b6-f complex subunit 4, found in Saccharum hybrid (Sugarcane).